The chain runs to 78 residues: Major outer membrane lipoprotein Lpp (78 aa).

The N-terminal stretch at 1 to 20 (MNRTKIVLGAVVLASTLLAG) is a signal peptide. C21 carries the N-palmitoyl cysteine lipid modification. C21 carries S-diacylglycerol cysteine lipidation. 2 consecutive repeats follow at residues 24 to 34 (TAKVDQLTSDI) and 38 to 48 (NAKVDQLSNDV). Positions 27–75 (VDQLTSDIQTLNAKVDQLSNDVNAVHTDVQAAKDDAARANQRLDNQVRS) form a coiled coil. At K78 the chain carries N6-murein peptidoglycan lysine.

Belongs to the Lpp family. In terms of assembly, homotrimer.

The protein localises to the cell outer membrane. The protein resides in the secreted. It is found in the cell wall. Functionally, a highly abundant outer membrane lipoprotein that controls the distance between the inner and outer membranes. The only protein known to be covalently linked to the peptidoglycan network (PGN). Also non-covalently binds the PGN. The link between the cell outer membrane and PGN contributes to maintenance of the structural and functional integrity of the cell envelope, and maintains the correct distance between the PGN and the outer membrane. The protein is Major outer membrane lipoprotein Lpp of Photorhabdus laumondii subsp. laumondii (strain DSM 15139 / CIP 105565 / TT01) (Photorhabdus luminescens subsp. laumondii).